The following is a 1705-amino-acid chain: Clathrin heavy chain 1 (1705 aa).

A2 carries the N-acetylalanine modification. Residues A2–Y492 are globular terminal domain. WD40-like repeat stretches follow at residues F25–T67, A68–Q113, V114–A155, N156–E205, A206–A270, D271–D314, and P315–N343. The interval E462–D478 is binding site for the uncoating ATPase, involved in lattice disassembly. The flexible linker stretch occupies residues I493–R536. The segment at T537–P648 is distal segment. Residues T537 to Y1705 form a heavy chain arm region. CHCR repeat units lie at residues Q551–V697, C700–F842, I847–D986, L993–A1138, F1142–A1283, L1288–N1434, and L1437–F1580. A proximal segment region spans residues V653 to Y1705. An involved in binding clathrin light chain region spans residues A1227–K1536. Residues A1564–Y1705 form a trimerization region.

It belongs to the clathrin heavy chain family. As to quaternary structure, clathrin triskelions, composed of 3 heavy chains and 3 light chains, are the basic subunits of the clathrin coat. Interacts with SCYL2B.

It is found in the cytoplasmic vesicle membrane. The protein localises to the membrane. The protein resides in the coated pit. Clathrin is the major protein of the polyhedral coat of coated pits and vesicles. Mediates endocytosis and is required for a correct polar distribution of PIN auxin transporters. In Arabidopsis thaliana (Mouse-ear cress), this protein is Clathrin heavy chain 1.